Here is a 269-residue protein sequence, read N- to C-terminus: Regulatory protein RecX (269 aa).

The protein belongs to the RecX family.

Its subcellular location is the cytoplasm. Functionally, modulates RecA activity. The protein is Regulatory protein RecX of Lactococcus lactis subsp. cremoris (strain SK11).